The primary structure comprises 377 residues: Pseudouridylate synthase RPUSD4, mitochondrial (377 aa).

The N-terminal 15 residues, 1 to 15, are a transit peptide targeting the mitochondrion; the sequence is MAAPRWSASGPWIRG. A coiled-coil region spans residues 36–62; it reads AASTAINAQRLAEKLRAQKREQDTKKE. The active site involves Asp153.

Belongs to the pseudouridine synthase RluA family. As to quaternary structure, interacts with 16S mt-rRNA, mt-tRNA(Phe) and mt-tRNA(Met). Forms a regulatory protein-RNA complex, consisting of RCC1L, NGRN, RPUSD3, RPUSD4, TRUB2, FASTKD2 and 16S mt-rRNA.

The protein resides in the mitochondrion matrix. The protein localises to the nucleus. It is found in the cytoplasm. It catalyses the reaction uridine in 5S rRNA = pseudouridine in 5S rRNA. The catalysed reaction is a uridine in tRNA = a pseudouridine in tRNA. It carries out the reaction a uridine in mRNA = a pseudouridine in mRNA. Catalyzes uridine to pseudouridine isomerization (pseudouridylation) of different mitochondrial RNA substrates. Acts on position 1397 in 16S mitochondrial ribosomal RNA (16S mt-rRNA). This modification is required for the assembly of 16S mt-rRNA into a functional mitochondrial ribosome. As a component of a functional protein-RNA module, consisting of RCC1L, NGRN, RPUSD3, RPUSD4, TRUB2, FASTKD2 and 16S mt-rRNA, controls 16S mt-rRNA abundance and is required for intra-mitochondrial translation. Acts on position 39 in mitochondrial tRNA(Phe). Also catalyzes pseudouridylation of mRNAs in nucleus: acts as a regulator of pre-mRNA splicing by mediating pseudouridylation of pre-mRNAs at locations associated with alternatively spliced regions. Pseudouridylation of pre-mRNAs near splice sites directly regulates mRNA splicing and mRNA 3'-end processing. The chain is Pseudouridylate synthase RPUSD4, mitochondrial from Homo sapiens (Human).